A 298-amino-acid chain; its full sequence is Lipoyl synthase (298 aa).

Residues Cys-37, Cys-42, Cys-48, Cys-63, Cys-67, Cys-70, and Ser-277 each contribute to the [4Fe-4S] cluster site. Positions 49–266 constitute a Radical SAM core domain; the sequence is WGGGTATVML…KTLAESYGFL (218 aa).

Belongs to the radical SAM superfamily. Lipoyl synthase family. The cofactor is [4Fe-4S] cluster.

The protein localises to the cytoplasm. It carries out the reaction [[Fe-S] cluster scaffold protein carrying a second [4Fe-4S](2+) cluster] + N(6)-octanoyl-L-lysyl-[protein] + 2 oxidized [2Fe-2S]-[ferredoxin] + 2 S-adenosyl-L-methionine + 4 H(+) = [[Fe-S] cluster scaffold protein] + N(6)-[(R)-dihydrolipoyl]-L-lysyl-[protein] + 4 Fe(3+) + 2 hydrogen sulfide + 2 5'-deoxyadenosine + 2 L-methionine + 2 reduced [2Fe-2S]-[ferredoxin]. It functions in the pathway protein modification; protein lipoylation via endogenous pathway; protein N(6)-(lipoyl)lysine from octanoyl-[acyl-carrier-protein]: step 2/2. Functionally, catalyzes the radical-mediated insertion of two sulfur atoms into the C-6 and C-8 positions of the octanoyl moiety bound to the lipoyl domains of lipoate-dependent enzymes, thereby converting the octanoylated domains into lipoylated derivatives. The chain is Lipoyl synthase from Myxococcus xanthus (strain DK1622).